A 588-amino-acid chain; its full sequence is MIQHPRIGIRPTIDGRRQGVRESLEVQTMNMAKSVADLISSTLKYPDGEPVECVISPSTIGRVPEAAASHELFKKSNVCATITVTPCWCYGSETMDMSPDIPHAIWGFNGTERPGAVYLAAVLASHAQKGIPAFGIYGRDVQEASDTAIPEDVKEKLLRYARAALATGLMRDTAYLSMGSVSMGIGGSIVNPDFFQEYLGMRNESVDMTEFTRRMDRGIYDPEEFERALKWVKENVKEGFDHNREDLVLSREEKDRQWEFVIKMFMIGRDLMVGNPRLAELGFEEEAVGHHALVAGFQGQRQWTDHFPNGDFMETFLNTQFDWNGIRKPFVFATENDSLNGVSMLFNYLLTNTPQIFADVRTYWSPEAVKRVTGHTLEGCAAAGFLHLINSGSCTLDGTGQATRDGKPVMKPFWELEESEVQAMLENTDFPPANREYFRGGGFSTRFLTKGDMPVTMVRLNLLKGVGPVLQIAEGYTLELPEDVHHTLDNRTDPGWPTTWFAPRLTGKGAFKSVYDVMNNWGANHGAITYGHIGADLITLASMLRIPVNMHNVPEEDIFRPKNWSLFGTEDLESADYRACQLLGPLHK.

Catalysis depends on proton acceptor residues E335 and D359. Mn(2+) contacts are provided by E335, D359, and H525.

It belongs to the L-fucose isomerase family. The cofactor is Mn(2+).

It localises to the cytoplasm. It carries out the reaction L-fucose = L-fuculose. It participates in carbohydrate degradation; L-fucose degradation; L-lactaldehyde and glycerone phosphate from L-fucose: step 1/3. Functionally, converts the aldose L-fucose into the corresponding ketose L-fuculose. This chain is L-fucose isomerase, found in Streptococcus pneumoniae (strain Hungary19A-6).